A 349-amino-acid chain; its full sequence is S-adenosylmethionine:tRNA ribosyltransferase-isomerase (349 aa).

It belongs to the QueA family. In terms of assembly, monomer.

The protein resides in the cytoplasm. It carries out the reaction 7-aminomethyl-7-carbaguanosine(34) in tRNA + S-adenosyl-L-methionine = epoxyqueuosine(34) in tRNA + adenine + L-methionine + 2 H(+). It participates in tRNA modification; tRNA-queuosine biosynthesis. Transfers and isomerizes the ribose moiety from AdoMet to the 7-aminomethyl group of 7-deazaguanine (preQ1-tRNA) to give epoxyqueuosine (oQ-tRNA). The protein is S-adenosylmethionine:tRNA ribosyltransferase-isomerase of Cupriavidus pinatubonensis (strain JMP 134 / LMG 1197) (Cupriavidus necator (strain JMP 134)).